Consider the following 4265-residue polypeptide: Dynein axonemal heavy chain 1 (4265 aa).

The disordered stretch occupies residues 1 to 88 (MEQPNSKGYS…KSPLTGTDKK (88 aa)). The tract at residues 1 to 1542 (MEQPNSKGYS…YIRAVNAEFI (1542 aa)) is stem. Pro residues predominate over residues 60–69 (PHLPLPPAPP). AAA stretches follow at residues 1543-1764 (YGYE…VISA), 1824-2057 (EAIR…SSVK), 2189-2449 (TMVP…VFQG), and 2547-2799 (DYNQ…LTRH). Residues 1581 to 1588 (GPAGTGKT) carry the GPAGTGKT motif motif. Residue 1581–1588 (GPAGTGKT) coordinates ATP. Positions 1631–1637 (CFDEFNR) match the CFDEFNR motif motif. ATP is bound by residues 1862 to 1869 (GPTGSGKS), 2227 to 2234 (GPTGTGKT), and 2586 to 2593 (GVGGSGRS). The tract at residues 2814 to 3112 (FSILIGQKKL…EELELKCEQC (299 aa)) is stalk. Residues 3074-3122 (LDEAKQRLREVEDGIATMQAKYRECITKKEELELKCEQCEQRLGRAGKL) are a coiled coil. 2 AAA regions span residues 3197-3427 (LGNP…EIQA) and 3640-3859 (MQDF…QLKM).

It belongs to the dynein heavy chain family. Consists of at least two heavy chains and a number of intermediate and light chains. Expressed primarily in trachea and testis, 2 tissues containing axonemal structures. Also expressed in brain.

The protein resides in the cytoplasm. It localises to the cytoskeleton. The protein localises to the cilium axoneme. It is found in the cell projection. Its subcellular location is the cilium. The protein resides in the flagellum. Functionally, force generating protein of cilia required for sperm flagellum motility. Produces force towards the minus ends of microtubules. Dynein has ATPase activity; the force-producing power stroke is thought to occur on release of ADP. Required in spermatozoa for the formation of the inner dynein arms and biogenesis of the axoneme. The chain is Dynein axonemal heavy chain 1 from Homo sapiens (Human).